Reading from the N-terminus, the 746-residue chain is WD repeat-containing protein 91 (746 aa).

The stretch at 183–215 forms a coiled coil; it reads QRTNQVQEENEVLRQKLFALQAEIHRLKKEEQQ. Phosphoserine is present on S256. Residues 265–278 show a composition bias toward low complexity; it reads LLPQSKKSPSRLSP. A disordered region spans residues 265-336; the sequence is LLPQSKKSPS…QHRQRRLQDH (72 aa). Residues 282-299 show a composition bias toward polar residues; that stretch reads PPQTQSSAKKESFGSQTT. Residues S288 and S293 each carry the phosphoserine modification. WD repeat units follow at residues 405–444, 447–487, 514–554, 559–598, 601–640, 663–701, and 708–746; these read EHHSSIMHCRVDCSGRRVASLDVDGVIKVWSFNPIMQTKA, ISKS…NLCE, AASS…QQLQ, PEPIAINCTAFNHNGNLLVTGAADGVIRLFDMQQHECAMS, AHCGEVYSVEFSYDENTVYSIGEDGKFIQWNIHKSGLKVS, VQVPRGRLFAFDSEGNYMLTCSATGGVIYKLGGDDKVLE, and GHRAPVVTVDWSTAMDCGTCLTASMDGKIKLTTLLAHKV.

The protein belongs to the WD repeat WDR91 family. Interacts with WDR81; involved in early to late endosome cargo transport. Interacts with BECN1; negatively regulates the PI3 kinase/PI3K activity associated with endosomal membranes.

The protein resides in the early endosome membrane. The protein localises to the late endosome membrane. Functionally, functions as a negative regulator of the PI3 kinase/PI3K activity associated with endosomal membranes via BECN1, a core subunit of the PI3K complex. By modifying the phosphatidylinositol 3-phosphate/PtdInsP3 content of endosomal membranes may regulate endosome fusion, recycling, sorting and early to late endosome transport. It is for instance, required for the delivery of cargos like BST2/tetherin from early to late endosome and thereby participates indirectly to their degradation by the lysosome. May play a role in meiosis. The chain is WD repeat-containing protein 91 from Bos taurus (Bovine).